Here is an 883-residue protein sequence, read N- to C-terminus: UTP--glucose-1-phosphate uridylyltransferase 3, chloroplastic (883 aa).

Residues methionine 1–proline 72 constitute a chloroplast transit peptide.

It belongs to the UDPGP type 1 family. Requires Mg(2+) as cofactor.

Its subcellular location is the plastid. It localises to the chloroplast. It catalyses the reaction alpha-D-glucose 1-phosphate + UTP + H(+) = UDP-alpha-D-glucose + diphosphate. Its activity is regulated as follows. Inhibited by pyrophosphate. Functionally, involved in the biosynthesis of sulfolipids in the chloroplast. Catalyzes the first committed step in sulfolipid biosynthesis. Converts glucose 1-phosphate to UDP-glucose, the precursor of the polar head of sulfolipid. In addition to glucose 1-phosphate, can use galactose 1-phosphate, but with much lower activity. No uridyltransferase activity with other hexose monophosphates. Specific for UTP and cannot use ATP, CTP, and GTP. The sequence is that of UTP--glucose-1-phosphate uridylyltransferase 3, chloroplastic from Arabidopsis thaliana (Mouse-ear cress).